A 634-amino-acid polypeptide reads, in one-letter code: DNA-directed RNA polymerase subunit gamma (634 aa).

4 residues coordinate Zn(2+): Cys74, Cys76, Cys89, and Cys92. Residues Asp471, Asp473, and Asp475 each coordinate Mg(2+).

The protein belongs to the RNA polymerase beta' chain family. RpoC1 subfamily. In terms of assembly, in cyanobacteria the RNAP catalytic core is composed of 2 alpha, 1 beta, 1 beta', 1 gamma and 1 omega subunit. When a sigma factor is associated with the core the holoenzyme is formed, which can initiate transcription. It depends on Mg(2+) as a cofactor. The cofactor is Zn(2+).

The catalysed reaction is RNA(n) + a ribonucleoside 5'-triphosphate = RNA(n+1) + diphosphate. DNA-dependent RNA polymerase catalyzes the transcription of DNA into RNA using the four ribonucleoside triphosphates as substrates. The chain is DNA-directed RNA polymerase subunit gamma from Prochlorococcus marinus (strain MIT 9313).